Here is a 205-residue protein sequence, read N- to C-terminus: Adenylyl-sulfate kinase (205 aa).

31 to 38 (GLSGAGKS) contacts ATP. The active-site Phosphoserine intermediate is S105.

The protein belongs to the APS kinase family.

The catalysed reaction is adenosine 5'-phosphosulfate + ATP = 3'-phosphoadenylyl sulfate + ADP + H(+). It participates in sulfur metabolism; hydrogen sulfide biosynthesis; sulfite from sulfate: step 2/3. Catalyzes the synthesis of activated sulfate. This chain is Adenylyl-sulfate kinase, found in Shewanella oneidensis (strain ATCC 700550 / JCM 31522 / CIP 106686 / LMG 19005 / NCIMB 14063 / MR-1).